A 148-amino-acid polypeptide reads, in one-letter code: Large ribosomal subunit protein uL22c (148 aa).

This sequence belongs to the universal ribosomal protein uL22 family. In terms of assembly, part of the 50S ribosomal subunit.

The protein localises to the plastid. Its subcellular location is the chloroplast. In terms of biological role, this protein binds specifically to 23S rRNA. Its function is as follows. The globular domain of the protein is located near the polypeptide exit tunnel on the outside of the subunit, while an extended beta-hairpin is found that lines the wall of the exit tunnel in the center of the 70S ribosome. In Zea mays (Maize), this protein is Large ribosomal subunit protein uL22c (rpl22).